The sequence spans 802 residues: MSFNHQEIEKKWQGYWEENKTFRTPDETEKPKFYALDMFPYPSGAGLHVGHPEGYTATDILSRMKRMQGYNVLHPMGWDAFGLPAEQYALDTGNSPAEFTEHNINTFRNQIKSLGFSYDWDREVNTTDPNYYKWTQWIFLKLFEKGLAYVDEVPVNWCPALGTVLANEEIIDGKSERGGHPVERRPMRQWMLKITAYGDRLLEDLDELDWPESLKDMQRNWIGRSEGAEVHFNIDGTDEKFTVFTTRPDTLFGASYCVLAPEHALVADITTAEQKEAVEAYINSVKMKSDLERTELAKEKTGVFTGAYAVNPVNGEKLPIWIADYVLATYGTGAVMAVPAHDERDYEFASTFNLPMKEVVKGGDITKEAYTGDGAHVNSAFLDGLNKEEAIAKMIEWLEVTSAGNQKVTYRLRDWLFSRQRYWGEPIPVIHWEDGTMTAVKEEELPLVLPKTENIRPSGTGESPLANIDEWVNVVDPETGKKGRRETNTMPQWAGSCWYYLRYIDPNNSEALVDPEKVKQWLPVDIYIGGAEHAVLHLLYARFWHKVLYDIGVVPTKEPFQQLFNQGMILGENNEKMSKSKGNVVNPDDIVASHGADTLRLYEMFMGPLDASIAWSENGLDGARRFLDRVWRLFVQDNGELSEKITDAPNKDLEKAYHQTVKKVTEDYAELRFNTAISQMMVFINDAYKAETLPKEYVEGFVKMIAPVAPHIGEELWSKLGYNETITYASWPTFDESKLVEDEVEIVVQVMGKVRAKLTMSKDASKDEMEKLALEAIQDQIEGKTVRKVIVVPGKLVNVVAN.

The short motif at proline 40–histidine 51 is the 'HIGH' region element. The short motif at lysine 576 to serine 580 is the 'KMSKS' region element. Position 579 (lysine 579) interacts with ATP.

Belongs to the class-I aminoacyl-tRNA synthetase family.

It is found in the cytoplasm. The catalysed reaction is tRNA(Leu) + L-leucine + ATP = L-leucyl-tRNA(Leu) + AMP + diphosphate. This Bacillus thuringiensis subsp. konkukian (strain 97-27) protein is Leucine--tRNA ligase.